Here is a 421-residue protein sequence, read N- to C-terminus: MFNITISKILARQILDSRGYPTIEVETILSNDIKAKACVPSGASVGKFEAVELRDNDKNFYNGYGVTKAINLINSEVAPQIISMNTLNQEKIDNALIEIDGTDNKSRIGANSTLAISLAIAKAAALALNIPLYQYLGGITAKVLPTPLINVINGGMHADNNLDFQEFMIIPNGANKFEDAIRMSAEVFFQLKQILKHKKLNTNVGDEGGFAPNIRINTEVFEIIIDAVEKSGYKMYEDFSLGLDIAASTFYKDQKYKFADYELNTQELVEYYKKIISQYPIISIEDPIAEEDINGWKLITQELGNKIQIVGDDLFVTNCKLIQNGIDNNMANAVLIKPNQIGTLTETFNAIRLAQKNNYNVIISHRSGETEDTTISHIAVATNCGQIKTGSLSRSERLAKYNELLYIEKLLGISAIYYGSL.

(2R)-2-phosphoglycerate is bound at residue Q165. The active-site Proton donor is E207. Mg(2+) contacts are provided by D244, E285, and D312. Residues K337, R366, S367, and K388 each coordinate (2R)-2-phosphoglycerate. Residue K337 is the Proton acceptor of the active site.

This sequence belongs to the enolase family. Requires Mg(2+) as cofactor.

The protein localises to the cytoplasm. The protein resides in the secreted. Its subcellular location is the cell surface. It catalyses the reaction (2R)-2-phosphoglycerate = phosphoenolpyruvate + H2O. The protein operates within carbohydrate degradation; glycolysis; pyruvate from D-glyceraldehyde 3-phosphate: step 4/5. Functionally, catalyzes the reversible conversion of 2-phosphoglycerate (2-PG) into phosphoenolpyruvate (PEP). It is essential for the degradation of carbohydrates via glycolysis. This chain is Enolase, found in Ehrlichia chaffeensis (strain ATCC CRL-10679 / Arkansas).